Here is a 212-residue protein sequence, read N- to C-terminus: Uridine kinase (212 aa).

Residue 13–20 coordinates ATP; it reads GGSGSGKT.

Belongs to the uridine kinase family.

Its subcellular location is the cytoplasm. The catalysed reaction is uridine + ATP = UMP + ADP + H(+). It carries out the reaction cytidine + ATP = CMP + ADP + H(+). The protein operates within pyrimidine metabolism; CTP biosynthesis via salvage pathway; CTP from cytidine: step 1/3. It participates in pyrimidine metabolism; UMP biosynthesis via salvage pathway; UMP from uridine: step 1/1. The sequence is that of Uridine kinase from Bacillus mycoides (strain KBAB4) (Bacillus weihenstephanensis).